The sequence spans 238 residues: Phosphoribosylaminoimidazole-succinocarboxamide synthase (238 aa).

The protein belongs to the SAICAR synthetase family.

The catalysed reaction is 5-amino-1-(5-phospho-D-ribosyl)imidazole-4-carboxylate + L-aspartate + ATP = (2S)-2-[5-amino-1-(5-phospho-beta-D-ribosyl)imidazole-4-carboxamido]succinate + ADP + phosphate + 2 H(+). It participates in purine metabolism; IMP biosynthesis via de novo pathway; 5-amino-1-(5-phospho-D-ribosyl)imidazole-4-carboxamide from 5-amino-1-(5-phospho-D-ribosyl)imidazole-4-carboxylate: step 1/2. The sequence is that of Phosphoribosylaminoimidazole-succinocarboxamide synthase from Marinomonas sp. (strain MWYL1).